Reading from the N-terminus, the 85-residue chain is MAHKKAGGSTRNGRDSEAKRLGVKRFGGEAVLAGSIIVRQRGTKFHAGTNVGCGKDHTLFALKDGKVKFEVKGPSNRKFISIEAE.

The segment at 1-20 (MAHKKAGGSTRNGRDSEAKR) is disordered.

The protein belongs to the bacterial ribosomal protein bL27 family.

The protein is Large ribosomal subunit protein bL27 of Serratia proteamaculans (strain 568).